Here is a 380-residue protein sequence, read N- to C-terminus: Cytochrome b (380 aa).

4 consecutive transmembrane segments (helical) span residues 33–53 (FGSL…FLAM), 77–98 (WLIR…FIHV), 113–133 (WNIG…GYVL), and 178–198 (FFAF…VHLL). Heme b is bound by residues His83 and His97. Residues His182 and His196 each contribute to the heme b site. His201 lines the a ubiquinone pocket. 4 consecutive transmembrane segments (helical) span residues 226–246 (IKDL…VLFF), 288–308 (LGGV…PLLN), 320–340 (ITQV…XXXX), and 347–367 (XXXX…IFMP).

It belongs to the cytochrome b family. As to quaternary structure, the cytochrome bc1 complex contains 11 subunits: 3 respiratory subunits (MT-CYB, CYC1 and UQCRFS1), 2 core proteins (UQCRC1 and UQCRC2) and 6 low-molecular weight proteins (UQCRH/QCR6, UQCRB/QCR7, UQCRQ/QCR8, UQCR10/QCR9, UQCR11/QCR10 and a cleavage product of UQCRFS1). This cytochrome bc1 complex then forms a dimer. Heme b serves as cofactor.

The protein localises to the mitochondrion inner membrane. In terms of biological role, component of the ubiquinol-cytochrome c reductase complex (complex III or cytochrome b-c1 complex) that is part of the mitochondrial respiratory chain. The b-c1 complex mediates electron transfer from ubiquinol to cytochrome c. Contributes to the generation of a proton gradient across the mitochondrial membrane that is then used for ATP synthesis. The protein is Cytochrome b (MT-CYB) of Rhipidomys leucodactylus (White-footed climbing mouse).